The primary structure comprises 147 residues: UPF0735 ACT domain-containing protein BPUM_2431 (147 aa).

In terms of domain architecture, ACT spans 70 to 145; the sequence is TLFFHLEDRS…FVEKVEILGS (76 aa).

Belongs to the UPF0735 family.

The protein is UPF0735 ACT domain-containing protein BPUM_2431 of Bacillus pumilus (strain SAFR-032).